The sequence spans 330 residues: Ribose-phosphate pyrophosphokinase (330 aa).

Residues 40-42 (DGE) and 99-100 (RQ) contribute to the ATP site. Residues H133 and D174 each coordinate Mg(2+). K197 is an active-site residue. D-ribose 5-phosphate is bound by residues R199, D223, and 227–231 (DTGGT).

Belongs to the ribose-phosphate pyrophosphokinase family. Class I subfamily. Homohexamer. Requires Mg(2+) as cofactor.

It is found in the cytoplasm. The catalysed reaction is D-ribose 5-phosphate + ATP = 5-phospho-alpha-D-ribose 1-diphosphate + AMP + H(+). It participates in metabolic intermediate biosynthesis; 5-phospho-alpha-D-ribose 1-diphosphate biosynthesis; 5-phospho-alpha-D-ribose 1-diphosphate from D-ribose 5-phosphate (route I): step 1/1. In terms of biological role, involved in the biosynthesis of the central metabolite phospho-alpha-D-ribosyl-1-pyrophosphate (PRPP) via the transfer of pyrophosphoryl group from ATP to 1-hydroxyl of ribose-5-phosphate (Rib-5-P). This is Ribose-phosphate pyrophosphokinase from Ureaplasma parvum serovar 3 (strain ATCC 700970).